The chain runs to 187 residues: High-affinity copper transporter ctrA2 (187 aa).

Helical transmembrane passes span 44–64 (YAGT…LVAF) and 137–157 (AAIF…VMTM).

Belongs to the copper transporter (Ctr) (TC 1.A.56) family. SLC31A subfamily.

The protein localises to the cell membrane. The catalysed reaction is Cu(2+)(in) = Cu(2+)(out). Its function is as follows. High-affinity copper transporter of plasma membrane that mediates copper uptake under low copper conditions. The mechanism driving the transmembrane transport of copper has still to be determined. Acts as a potential virulence factor. This Aspergillus fumigatus (strain ATCC MYA-4609 / CBS 101355 / FGSC A1100 / Af293) (Neosartorya fumigata) protein is High-affinity copper transporter ctrA2.